We begin with the raw amino-acid sequence, 79 residues long: uncharacterized protein (79 aa).

The first 20 residues, 1–20 (MSQLMGIITRLQSLQETAEA), serve as a signal peptide directing secretion.

This is an uncharacterized protein from Bacillus subtilis (strain 168).